Consider the following 230-residue polypeptide: UPF0173 metal-dependent hydrolase Rsph17025_2229 (230 aa).

This sequence belongs to the UPF0173 family.

This chain is UPF0173 metal-dependent hydrolase Rsph17025_2229, found in Cereibacter sphaeroides (strain ATCC 17025 / ATH 2.4.3) (Rhodobacter sphaeroides).